Here is a 401-residue protein sequence, read N- to C-terminus: Inositol phosphorylceramide synthase catalytic subunit AUR1 (401 aa).

Topologically, residues 1–41 (MANPFSRWFLSERPPNCHVADLETSLDPHQTLLKVQKYKPA) are cytoplasmic. The chain crosses the membrane as a helical span at residues 42-62 (LSDWVHYIFLGSIMLFVFITN). The Lumenal segment spans residues 63-64 (PA). A helical membrane pass occupies residues 65-85 (PWIFKILFYCFLGTLFIIPAT). The Cytoplasmic segment spans residues 86-87 (SQ). Residues 88–108 (FFFNALPILTWVALYFTSSYF) form a helical membrane-spanning segment. At 109-155 (PDDRRPPITVKVLPAVETILYGDNLSDILATSTNSFLDILAWLPYGL) the chain is on the lumenal side. Asn132 is a glycosylation site (N-linked (GlcNAc...) asparagine). The chain crosses the membrane as a helical span at residues 156 to 176 (FHFGAPFVVAAILFVFGPPTV). At 177 to 178 (LQ) the chain is on the cytoplasmic side. The chain crosses the membrane as a helical span at residues 179 to 199 (GYAFAFGYMNLFGVIMQNVFP). The Lumenal portion of the chain corresponds to 200 to 245 (AAPPWYKILYGLQSANYDMHGSPGGLARIDKLLGINMYTTAFSNSS). The chain crosses the membrane as a helical span at residues 246–266 (VIFGAFPSLHSGCATMEALFF). The Cytoplasmic segment spans residues 267 to 268 (CY). A helical transmembrane segment spans residues 269–289 (CFPKLKPLFIAYVCWLWWSTM). Residues 290–291 (YL) lie on the Lumenal side of the membrane. A helical membrane pass occupies residues 292–312 (THHYFVDLMAGSVLSYVIFQY). The Cytoplasmic segment spans residues 313–401 (TKYTHLPIVD…SITSLGVKRA (89 aa)). The disordered stretch occupies residues 374–401 (VSPSLFDGSTSVSRSSATSITSLGVKRA). The span at 382 to 395 (STSVSRSSATSITS) shows a compositional bias: low complexity. A phosphoserine mark is found at Ser392 and Ser395.

It belongs to the AUR1 family. As to quaternary structure, component of the inositol phosphorylceramide synthase complex composed of at least AUR1 and KEI1.

The protein localises to the golgi apparatus. It is found in the golgi stack membrane. It carries out the reaction an N-(2R-hydroxy-very-long-chain fatty acyl)-(R)-4-hydroxysphingoid base + a 1,2-diacyl-sn-glycero-3-phospho-(1D-myo-inositol) = a 1D-myo-inositol-1-phospho-N-[(R)-2-hydroxy-very-long-chain fatty acyl]-(R)-4-hydroxysphingoid base + a 1,2-diacyl-sn-glycerol. With respect to regulation, inhibited by aureobasidin A (AbA), khafrefungin and rustmicin. Its function is as follows. Catalytic component of the inositol phosphorylceramide synthase which catalyzes the addition of a phosphorylinositol group onto ceramide to form inositol phosphorylceramide, an essential step in sphingolipid biosynthesis. The protein is Inositol phosphorylceramide synthase catalytic subunit AUR1 of Saccharomyces cerevisiae (strain ATCC 204508 / S288c) (Baker's yeast).